We begin with the raw amino-acid sequence, 546 residues long: Probable Xaa-Pro aminopeptidase pepP (546 aa).

Positions 341, 352, 475, and 515 each coordinate Mn(2+).

Belongs to the peptidase M24B family. Requires Mn(2+) as cofactor.

It catalyses the reaction Release of any N-terminal amino acid, including proline, that is linked to proline, even from a dipeptide or tripeptide.. Catalyzes the removal of a penultimate prolyl residue from the N-termini of peptides. The chain is Probable Xaa-Pro aminopeptidase pepP (pepP) from Sclerotinia sclerotiorum (strain ATCC 18683 / 1980 / Ss-1) (White mold).